Consider the following 197-residue polypeptide: Protein GrpE (197 aa).

The interval 1 to 39 (MSSKEQKTPEGQAPEEIIMDQHEEIEAVEPEASAEQVDP) is disordered.

The protein belongs to the GrpE family. Homodimer.

It localises to the cytoplasm. Its function is as follows. Participates actively in the response to hyperosmotic and heat shock by preventing the aggregation of stress-denatured proteins, in association with DnaK and GrpE. It is the nucleotide exchange factor for DnaK and may function as a thermosensor. Unfolded proteins bind initially to DnaJ; upon interaction with the DnaJ-bound protein, DnaK hydrolyzes its bound ATP, resulting in the formation of a stable complex. GrpE releases ADP from DnaK; ATP binding to DnaK triggers the release of the substrate protein, thus completing the reaction cycle. Several rounds of ATP-dependent interactions between DnaJ, DnaK and GrpE are required for fully efficient folding. This chain is Protein GrpE, found in Escherichia coli O45:K1 (strain S88 / ExPEC).